The sequence spans 167 residues: UPF0178 protein bll3966 (167 aa).

This sequence belongs to the UPF0178 family.

This Bradyrhizobium diazoefficiens (strain JCM 10833 / BCRC 13528 / IAM 13628 / NBRC 14792 / USDA 110) protein is UPF0178 protein bll3966.